The primary structure comprises 379 residues: Fucose-specific lectin g276 (379 aa).

Glutamate 126 lines the alpha-L-fucose pocket. Residues glutamate 126, arginine 163, and tryptophan 185 each contribute to the beta-L-fucose site. Alpha-L-fucose contacts are provided by tryptophan 185, arginine 222, and glutamate 234. Residues tryptophan 242 and glutamate 282 each coordinate beta-L-fucose. Tryptophan 289 lines the alpha-L-fucose pocket.

Belongs to the fungal fucose-specific lectin family.

In terms of biological role, lectin that specifically binds to L-fucose. Is associated with the morphogenesis of the fungus, and plays a role in the formation of the constricting rings involved in nematode-trapping. The polypeptide is Fucose-specific lectin g276 (Arthrobotrys oligospora (strain ATCC 24927 / CBS 115.81 / DSM 1491) (Nematode-trapping fungus)).